A 176-amino-acid polypeptide reads, in one-letter code: Alkyl hydroperoxide reductase AhpD (176 aa).

Residue C131 is the Proton donor of the active site. A disulfide bridge links C131 with C134. Catalysis depends on C134, which acts as the Cysteine sulfenic acid (-SOH) intermediate.

The protein belongs to the AhpD family.

The enzyme catalyses N(6)-[(R)-dihydrolipoyl]-L-lysyl-[lipoyl-carrier protein] + a hydroperoxide = N(6)-[(R)-lipoyl]-L-lysyl-[lipoyl-carrier protein] + an alcohol + H2O. Functionally, antioxidant protein with alkyl hydroperoxidase activity. Required for the reduction of the AhpC active site cysteine residues and for the regeneration of the AhpC enzyme activity. The sequence is that of Alkyl hydroperoxide reductase AhpD from Methylobacterium sp. (strain 4-46).